The primary structure comprises 417 residues: Probable uracil permease (417 aa).

At 1-13 (MTNQNPPVLLEQN) the chain is on the cytoplasmic side. The chain crosses the membrane as a helical span at residues 14–37 (HAKQAFVGLQMLFVAFGALVLVPL). Residues 38 to 41 (ITGL) are Periplasmic-facing. The helical transmembrane segment at 42–61 (NANTALLTAGIGTLLFQLCT) threads the bilayer. Residues 62–64 (GRQ) lie on the Cytoplasmic side of the membrane. The chain crosses the membrane as a discontinuously helical span at residues 65–81 (VPIFLASSFAFIAPIQY). Phe73 provides a ligand contact to uracil. Residues 83–90 (VTTWGIAT) lie on the Periplasmic side of the membrane. A helical membrane pass occupies residues 91 to 111 (TMGGLVFTGLVYFALSTLVKI). Over 112–123 (KGAGALQKVFPP) the chain is Cytoplasmic. The helical transmembrane segment at 124–145 (VVVGPVIIIIGMGLAPVAVDMA) threads the bilayer. Residues 146-154 (LGKNSTYQY) are Periplasmic-facing. The chain crosses the membrane as a helical span at residues 155 to 170 (NDAVFVSMATLLTTLG). Topologically, residues 171 to 177 (VAVFAKG) are cytoplasmic. A helical membrane pass occupies residues 178–198 (MMKLIPIMFGIVVGYILCLFL). At 199–223 (GLINFQPVIDAPWFSVPEITTPEFK) the chain is on the periplasmic side. The chain crosses the membrane as a helical span at residues 224 to 247 (LEAILYLLPIAIAPAVEHVGGIMA). Glu240 serves as a coordination point for uracil. Residues 248–260 (ISSVTGKDFLQKP) lie on the Cytoplasmic side of the membrane. Residues 261 to 280 (GLHRTLLGDGIATSAASFLG) form a helical membrane-spanning segment. The discontinuously helical transmembrane segment at 281-297 (GPPNTTYAEVTGAVMLT) threads the bilayer. Glu289 serves as a coordination point for uracil. Residues 298-300 (RNF) are Cytoplasmic-facing. Residues 301–318 (NPKIMTWAAVWAIAISFC) form a helical membrane-spanning segment. Topologically, residues 319-331 (GKVGAFLSTIPTI) are periplasmic. Residues 332–353 (VMGGIMMLVFGSIAVVGMSTLI) form a helical membrane-spanning segment. At 354-364 (RGKVDVTEARN) the chain is on the cytoplasmic side. The discontinuously helical intramembrane region spans 365–400 (LCIISVVMTFGIGGMFVNFGEVSLKGISLCAVVAIL). The Cytoplasmic portion of the chain corresponds to 401–416 (LNLILPKAKNTPIEEN).

Belongs to the nucleobase:cation symporter-2 (NCS2) (TC 2.A.40) family.

It is found in the cell inner membrane. The enzyme catalyses uracil(in) + H(+)(in) = uracil(out) + H(+)(out). In terms of biological role, transport of uracil in the cell. The protein is Probable uracil permease (uraA) of Pasteurella multocida (strain Pm70).